The following is a 217-amino-acid chain: PTB-containing, cubilin and LRP1-interacting protein (217 aa).

The region spanning valine 60–glycine 217 is the PID domain. The disordered stretch occupies residues lysine 194–glycine 217. Phosphoserine is present on residues serine 202, serine 203, and serine 214. A compositionally biased stretch (acidic residues) spans alanine 208 to glycine 217.

Found in a complex with PID1/PCLI1, LRP1 and CUBNI. Interacts with LRP1 and CUBN.

It is found in the cytoplasm. Its function is as follows. Increases proliferation of preadipocytes without affecting adipocytic differentiation. This chain is PTB-containing, cubilin and LRP1-interacting protein (Pid1), found in Mus musculus (Mouse).